Consider the following 119-residue polypeptide: Large ribosomal subunit protein uL22c (119 aa).

This sequence belongs to the universal ribosomal protein uL22 family. In terms of assembly, part of the 50S ribosomal subunit.

The protein resides in the plastid. It localises to the chloroplast. In terms of biological role, this protein binds specifically to 23S rRNA. The globular domain of the protein is located near the polypeptide exit tunnel on the outside of the subunit, while an extended beta-hairpin is found that lines the wall of the exit tunnel in the center of the 70S ribosome. The polypeptide is Large ribosomal subunit protein uL22c (rpl22) (Anthoceros angustus (Hornwort)).